The following is a 159-amino-acid chain: Ribosomal RNA large subunit methyltransferase H (159 aa).

S-adenosyl-L-methionine is bound by residues L76, G108, and 127-132; that span reads FSKMTF.

The protein belongs to the RNA methyltransferase RlmH family. In terms of assembly, homodimer.

It is found in the cytoplasm. It carries out the reaction pseudouridine(1915) in 23S rRNA + S-adenosyl-L-methionine = N(3)-methylpseudouridine(1915) in 23S rRNA + S-adenosyl-L-homocysteine + H(+). Its function is as follows. Specifically methylates the pseudouridine at position 1915 (m3Psi1915) in 23S rRNA. The protein is Ribosomal RNA large subunit methyltransferase H of Geobacillus kaustophilus (strain HTA426).